A 200-amino-acid polypeptide reads, in one-letter code: MGKKDRDSSKPRGRMSAYAYFVQDSRAEHGKNHPNSPVRFAEFSKDCSARWKALEEKGKGVFHEKSMRDKVRYDREMQSYKPPKGEKNKRRRRRKDPDAPKRNLSAFFIFSGENRAAIKSVHPNWSVGDIAKELAVRWRAMTAGEKIPFDKGAAKDKERYIKAMAEYKAKAKPMKRQVKESSSSSSSDSSSDDSSSDDSD.

2 DNA-binding regions (HMG box) span residues 11 to 81 (PRGR…QSYK) and 100 to 168 (PKRN…AEYK). Basic and acidic residues predominate over residues 64-86 (EKSMRDKVRYDREMQSYKPPKGE). Disordered stretches follow at residues 64–103 (EKSM…PKRN) and 169–200 (AKAK…DDSD). Acidic residues predominate over residues 190–200 (SSDDSSSDDSD).

Belongs to the HMGB family.

It localises to the nucleus. It is found in the chromosome. Binds preferentially single-stranded DNA and unwinds double-stranded DNA. This is High mobility group protein 1 homolog (HMG1) from Strongylocentrotus purpuratus (Purple sea urchin).